Consider the following 361-residue polypeptide: Chorismate synthase (361 aa).

The NADP(+) site is built by R48 and R54. FMN contacts are provided by residues 125–127 (RSS), 238–239 (NA), G278, 293–297 (KPTSS), and R319.

The protein belongs to the chorismate synthase family. As to quaternary structure, homotetramer. The cofactor is FMNH2.

The catalysed reaction is 5-O-(1-carboxyvinyl)-3-phosphoshikimate = chorismate + phosphate. It participates in metabolic intermediate biosynthesis; chorismate biosynthesis; chorismate from D-erythrose 4-phosphate and phosphoenolpyruvate: step 7/7. Catalyzes the anti-1,4-elimination of the C-3 phosphate and the C-6 proR hydrogen from 5-enolpyruvylshikimate-3-phosphate (EPSP) to yield chorismate, which is the branch point compound that serves as the starting substrate for the three terminal pathways of aromatic amino acid biosynthesis. This reaction introduces a second double bond into the aromatic ring system. The polypeptide is Chorismate synthase (Methylobacillus flagellatus (strain ATCC 51484 / DSM 6875 / VKM B-1610 / KT)).